Reading from the N-terminus, the 144-residue chain is Large ribosomal subunit protein uL15 (144 aa).

The disordered stretch occupies residues 1–51; the sequence is MRLNTLSPAEGAKHSAKRLGRGIGSGLGKTGGRGHKGQKSRTGGKVRRGFE. Residues 21 to 31 show a composition bias toward gly residues; sequence RGIGSGLGKTG. Over residues 32-47 the composition is skewed to basic residues; the sequence is GRGHKGQKSRTGGKVR.

The protein belongs to the universal ribosomal protein uL15 family. In terms of assembly, part of the 50S ribosomal subunit.

Its function is as follows. Binds to the 23S rRNA. The chain is Large ribosomal subunit protein uL15 from Actinobacillus succinogenes (strain ATCC 55618 / DSM 22257 / CCUG 43843 / 130Z).